The following is a 220-amino-acid chain: GTP cyclohydrolase 1 (220 aa).

Residues Cys-109, His-112, and Cys-180 each coordinate Zn(2+).

This sequence belongs to the GTP cyclohydrolase I family. Homomer.

The catalysed reaction is GTP + H2O = 7,8-dihydroneopterin 3'-triphosphate + formate + H(+). It functions in the pathway cofactor biosynthesis; 7,8-dihydroneopterin triphosphate biosynthesis; 7,8-dihydroneopterin triphosphate from GTP: step 1/1. This chain is GTP cyclohydrolase 1, found in Edwardsiella ictaluri (strain 93-146).